The primary structure comprises 592 residues: Aspartate--tRNA(Asp/Asn) ligase (592 aa).

E171 serves as a coordination point for L-aspartate. Positions 195 to 198 are aspartate; it reads QLFK. R217 serves as a coordination point for L-aspartate. Residues 217–219 and Q226 each bind ATP; that span reads RDE. Residue H447 coordinates L-aspartate. E481 contacts ATP. Position 488 (R488) interacts with L-aspartate. 533–536 lines the ATP pocket; it reads GLDR.

Belongs to the class-II aminoacyl-tRNA synthetase family. Type 1 subfamily. In terms of assembly, homodimer.

The protein resides in the cytoplasm. The enzyme catalyses tRNA(Asx) + L-aspartate + ATP = L-aspartyl-tRNA(Asx) + AMP + diphosphate. Its function is as follows. Aspartyl-tRNA synthetase with relaxed tRNA specificity since it is able to aspartylate not only its cognate tRNA(Asp) but also tRNA(Asn). Reaction proceeds in two steps: L-aspartate is first activated by ATP to form Asp-AMP and then transferred to the acceptor end of tRNA(Asp/Asn). The protein is Aspartate--tRNA(Asp/Asn) ligase of Psychromonas ingrahamii (strain DSM 17664 / CCUG 51855 / 37).